Reading from the N-terminus, the 292-residue chain is Acetylglutamate kinase (292 aa).

Residues 72 to 73 (GG), R94, and N187 contribute to the substrate site.

Belongs to the acetylglutamate kinase family. ArgB subfamily.

It localises to the cytoplasm. The enzyme catalyses N-acetyl-L-glutamate + ATP = N-acetyl-L-glutamyl 5-phosphate + ADP. Its pathway is amino-acid biosynthesis; L-arginine biosynthesis; N(2)-acetyl-L-ornithine from L-glutamate: step 2/4. In terms of biological role, catalyzes the ATP-dependent phosphorylation of N-acetyl-L-glutamate. In Trichodesmium erythraeum (strain IMS101), this protein is Acetylglutamate kinase.